A 202-amino-acid chain; its full sequence is MKSDSIAVDVPAESSSAIKGKAPLLGLARDHTGSGGYKRGLSIFDFLLRLAAIVAALAAAATMGTSDETLPFFTQFLQFEASYDDLPTFQFFVVAIAIVTGYLVLSLPFSVVTIVRPLAVAPRLLLLVLDTAALALDTAAASAAAAIVYLAHNGNTNTNWLPICQQFGDFCQKTSGAVVSAFASVTFLAILVVISGVSLKRP.

The Cytoplasmic portion of the chain corresponds to 1–40; sequence MKSDSIAVDVPAESSSAIKGKAPLLGLARDHTGSGGYKRG. A helical transmembrane segment spans residues 41–61; that stretch reads LSIFDFLLRLAAIVAALAAAA. Over 62–90 the chain is Extracellular; it reads TMGTSDETLPFFTQFLQFEASYDDLPTFQ. The helical transmembrane segment at 91-111 threads the bilayer; the sequence is FFVVAIAIVTGYLVLSLPFSV. Topologically, residues 112-130 are cytoplasmic; sequence VTIVRPLAVAPRLLLLVLD. A helical transmembrane segment spans residues 131 to 151; sequence TAALALDTAAASAAAAIVYLA. Residues 152 to 176 lie on the Extracellular side of the membrane; sequence HNGNTNTNWLPICQQFGDFCQKTSG. A helical membrane pass occupies residues 177–197; it reads AVVSAFASVTFLAILVVISGV. Topologically, residues 198–202 are cytoplasmic; that stretch reads SLKRP.

It belongs to the Casparian strip membrane proteins (CASP) family. As to quaternary structure, homodimer and heterodimers.

Its subcellular location is the cell membrane. Regulates membrane-cell wall junctions and localized cell wall deposition. Required for establishment of the Casparian strip membrane domain (CSD) and the subsequent formation of Casparian strips, a cell wall modification of the root endodermis that determines an apoplastic barrier between the intraorganismal apoplasm and the extraorganismal apoplasm and prevents lateral diffusion. In Arabidopsis lyrata subsp. lyrata (Lyre-leaved rock-cress), this protein is Casparian strip membrane protein 4.